A 269-amino-acid chain; its full sequence is Shikimate dehydrogenase (NADP(+)) (269 aa).

Shikimate-binding positions include 17–19 and T64; that span reads SKS. K68 serves as the catalytic Proton acceptor. D80 contributes to the NADP(+) binding site. Shikimate-binding residues include N89 and D105. NADP(+)-binding positions include 130–134, 154–159, and M213; these read GAGGA and NRTHAK. Residue Y215 participates in shikimate binding. G237 provides a ligand contact to NADP(+).

This sequence belongs to the shikimate dehydrogenase family. Homodimer.

It catalyses the reaction shikimate + NADP(+) = 3-dehydroshikimate + NADPH + H(+). It participates in metabolic intermediate biosynthesis; chorismate biosynthesis; chorismate from D-erythrose 4-phosphate and phosphoenolpyruvate: step 4/7. In terms of biological role, involved in the biosynthesis of the chorismate, which leads to the biosynthesis of aromatic amino acids. Catalyzes the reversible NADPH linked reduction of 3-dehydroshikimate (DHSA) to yield shikimate (SA). This chain is Shikimate dehydrogenase (NADP(+)), found in Neisseria polysaccharea.